The sequence spans 679 residues: Methionine--tRNA ligase (679 aa).

A 'HIGH' region motif is present at residues 14 to 24; that stretch reads PYANGSIHLGH. Positions 145, 148, 158, and 161 each coordinate Zn(2+). The short motif at 331–335 is the 'KMSKS' region element; it reads KMSKS. Lys334 lines the ATP pocket. The region spanning 577–679 is the tRNA-binding domain; the sequence is TFAAVDLRVA…SGAKPGQRIK (103 aa).

This sequence belongs to the class-I aminoacyl-tRNA synthetase family. MetG type 1 subfamily. As to quaternary structure, homodimer. Zn(2+) is required as a cofactor.

The protein localises to the cytoplasm. It carries out the reaction tRNA(Met) + L-methionine + ATP = L-methionyl-tRNA(Met) + AMP + diphosphate. In terms of biological role, is required not only for elongation of protein synthesis but also for the initiation of all mRNA translation through initiator tRNA(fMet) aminoacylation. The protein is Methionine--tRNA ligase of Pseudomonas putida (strain ATCC 700007 / DSM 6899 / JCM 31910 / BCRC 17059 / LMG 24140 / F1).